The chain runs to 294 residues: Beta-glucoside kinase (294 aa).

5-11 (AFDIGGT) is an ATP binding site.

The protein belongs to the ROK (NagC/XylR) family.

It carries out the reaction D-cellobiose + ATP = 6-phospho-beta-D-glucosyl-(1-&gt;4)-D-glucose + ADP + H(+). Its function is as follows. Catalyzes the ATP-dependent phosphorylation of cellobiose to produce cellobiose-6'-P. May have a dual role of kinase and transcriptional regulator of the cellobiose-PTS operon. In Listeria monocytogenes serovar 1/2a (strain ATCC BAA-679 / EGD-e), this protein is Beta-glucoside kinase (bglK).